A 906-amino-acid polypeptide reads, in one-letter code: MTLDEEYLDITFLTENGFVRKRCPKCGKHFWTADPEREICGDPPCESYSFIGNPVFKKPFELDEMREYYLNFFERRGHGRIERYPVVARWRTDIYLTIASIADFQPFVTSGVAPPPANPLTISQPCIRLDDLDSVGRTGRHLTLFEMMAHHAFNYPGKEIYWKNETVAYCTELLNELGVKKEDIVYKEEPWAGGGNAGPCLEAIVGGLEVATLVFMNLEEHPEGDIEIKGARYRKMDNYIVDTGYGLERFVWASKGTPTVYDAIFPEVVDTIIDNSNVSFNREDERVRRIVAESSKLAGIMGELRGERLNQLRKSVADTVGVSVEELEGIVVPLEKVYSLADHTRCILFMLGDGLVPSNAGAGYLARLMIRRSLRLAEELELGLDLYDLVEMHKKILGFEFDVPLSTVQEILELEKERYRTTVSKGTRLVERLVERKKKLEKDDLIELYDSHGIPVELAVGIAAEKGAEVEMPKDIYAELAKRHSKAEKVQEKKITLQNEYPATEKLYYDDPTLLEFEAEVIGVEGDFVILNRSAFYPESGGQDNDVGYLIANGGKFEVVDVLEADGVVLHVVKGAKPEVGTKVKGVIDSDVRWRHMRHHSATHVLLYSLQKVLGNHVWQAGARKEFSKARLDVTHFRRPSEEEIKEIEMLANREILANKPIKWEWMDRIEAERKFGFRLYQGGVPPGRKIRVVQVGDDVQACGGTHCRSTGEIGMLKILKVESIQDGVIRFEFAAGEAAIEAVEEMERLLREASSILRVEPAKLPKTVERFFEEWKDQRKEIERLKSVIADLWADILMERAEEFDSMKVVAEVVDADMQALQKLAERLAEKGAVGCLMAKGEGKVFVVTFSGQKYDARELLREIGRVAKGSGGGRKDVAQGAVQQLLDREEMLDVIFRFLSEHEG.

Zn(2+) is bound by residues His600, His604, Cys703, and His707.

This sequence belongs to the class-II aminoacyl-tRNA synthetase family. Homodimer. Zn(2+) is required as a cofactor.

Its subcellular location is the cytoplasm. The enzyme catalyses tRNA(Ala) + L-alanine + ATP = L-alanyl-tRNA(Ala) + AMP + diphosphate. Functionally, catalyzes the attachment of alanine to tRNA(Ala) in a two-step reaction: alanine is first activated by ATP to form Ala-AMP and then transferred to the acceptor end of tRNA(Ala). Incorrectly charged aminoacyl-tRNA(Ala) is also edited in situ by the editing domain. This chain is Alanine--tRNA ligase (alaS), found in Archaeoglobus fulgidus (strain ATCC 49558 / DSM 4304 / JCM 9628 / NBRC 100126 / VC-16).